A 765-amino-acid polypeptide reads, in one-letter code: Protein PAT1 homolog 1 (765 aa).

3 disordered regions span residues 1-98 (MFRF…DERG), 119-147 (GVGSTSSDRSHLPPMLSAHPPHPSALAGP), and 210-244 (LPNRPPSLSRDEGRDLSERVPPPRSSSPVIGSPPV). Acidic residues predominate over residues 7–30 (LDDDCTLEEEEGLVEEEDEIDQFN). Positions 45–59 (EEHTRLAELDERVRD) are enriched in basic and acidic residues. The span at 218-227 (SRDEGRDLSE) shows a compositional bias: basic and acidic residues. Residues S235 and S236 each carry the phosphoserine modification. The span at 235–244 (SSPVIGSPPV) shows a compositional bias: low complexity.

The protein belongs to the PAT1 family. As to quaternary structure, interacts with ribonucleoprotein complex components.

It is found in the cytoplasm. The protein resides in the P-body. Its subcellular location is the nucleus. The protein localises to the PML body. It localises to the nucleus speckle. Functionally, RNA-binding protein involved in deadenylation-dependent decapping of mRNAs, leading to the degradation of mRNAs. Acts as a scaffold protein that connects deadenylation and decapping machinery. Required for cytoplasmic mRNA processing body (P-body) assembly. This is Protein PAT1 homolog 1 (patl1) from Danio rerio (Zebrafish).